We begin with the raw amino-acid sequence, 75 residues long: DNA-directed RNA polymerase subunit Rpo5 (75 aa).

This sequence belongs to the archaeal Rpo5/eukaryotic RPB5 RNA polymerase subunit family. As to quaternary structure, part of the RNA polymerase complex.

The protein localises to the cytoplasm. It carries out the reaction RNA(n) + a ribonucleoside 5'-triphosphate = RNA(n+1) + diphosphate. In terms of biological role, DNA-dependent RNA polymerase (RNAP) catalyzes the transcription of DNA into RNA using the four ribonucleoside triphosphates as substrates. The sequence is that of DNA-directed RNA polymerase subunit Rpo5 from Halobacterium salinarum (strain ATCC 700922 / JCM 11081 / NRC-1) (Halobacterium halobium).